A 302-amino-acid polypeptide reads, in one-letter code: Sulfate adenylyltransferase subunit 2 (302 aa).

Belongs to the PAPS reductase family. CysD subfamily. Heterodimer composed of CysD, the smaller subunit, and CysN.

The enzyme catalyses sulfate + ATP + H(+) = adenosine 5'-phosphosulfate + diphosphate. Its pathway is sulfur metabolism; hydrogen sulfide biosynthesis; sulfite from sulfate: step 1/3. With CysN forms the ATP sulfurylase (ATPS) that catalyzes the adenylation of sulfate producing adenosine 5'-phosphosulfate (APS) and diphosphate, the first enzymatic step in sulfur assimilation pathway. APS synthesis involves the formation of a high-energy phosphoric-sulfuric acid anhydride bond driven by GTP hydrolysis by CysN coupled to ATP hydrolysis by CysD. In Shigella boydii serotype 4 (strain Sb227), this protein is Sulfate adenylyltransferase subunit 2.